A 287-amino-acid chain; its full sequence is Bifunctional protein FolD (287 aa).

NADP(+) contacts are provided by residues 160-162 (GRS), Ser189, and Thr230.

It belongs to the tetrahydrofolate dehydrogenase/cyclohydrolase family. In terms of assembly, homodimer.

The catalysed reaction is (6R)-5,10-methylene-5,6,7,8-tetrahydrofolate + NADP(+) = (6R)-5,10-methenyltetrahydrofolate + NADPH. It carries out the reaction (6R)-5,10-methenyltetrahydrofolate + H2O = (6R)-10-formyltetrahydrofolate + H(+). It participates in one-carbon metabolism; tetrahydrofolate interconversion. Its function is as follows. Catalyzes the oxidation of 5,10-methylenetetrahydrofolate to 5,10-methenyltetrahydrofolate and then the hydrolysis of 5,10-methenyltetrahydrofolate to 10-formyltetrahydrofolate. This Chlamydia caviae (strain ATCC VR-813 / DSM 19441 / 03DC25 / GPIC) (Chlamydophila caviae) protein is Bifunctional protein FolD.